The following is a 184-amino-acid chain: NADH-quinone oxidoreductase subunit B (184 aa).

[4Fe-4S] cluster contacts are provided by Cys63, Cys64, Cys128, and Cys158.

This sequence belongs to the complex I 20 kDa subunit family. As to quaternary structure, NDH-1 is composed of 14 different subunits. Subunits NuoB, C, D, E, F, and G constitute the peripheral sector of the complex. [4Fe-4S] cluster is required as a cofactor.

The protein resides in the cell inner membrane. It carries out the reaction a quinone + NADH + 5 H(+)(in) = a quinol + NAD(+) + 4 H(+)(out). Its function is as follows. NDH-1 shuttles electrons from NADH, via FMN and iron-sulfur (Fe-S) centers, to quinones in the respiratory chain. Couples the redox reaction to proton translocation (for every two electrons transferred, four hydrogen ions are translocated across the cytoplasmic membrane), and thus conserves the redox energy in a proton gradient. The chain is NADH-quinone oxidoreductase subunit B from Xanthomonas campestris pv. campestris (strain 8004).